The primary structure comprises 288 residues: POU domain class 2-associating factor 2 (288 aa).

Residues 10–32 (KRVYQGVRVKHTVKDLLAEKRSG) enclose the OCA domain. 2 disordered regions span residues 24-52 (DLLA…PFVQ) and 247-274 (PPKV…VKED). Over residues 35-48 (SNSRLNGSVSSSQS) the composition is skewed to low complexity.

It belongs to the POU2AF family. In terms of assembly, interacts with POU2F3 (via the POU domain) in a DNA-dependent manner; this interaction recruits POU2AF2 to chromatin and increases POU2F3 transactivation activity. In terms of tissue distribution, expressed in tuft cells of colon mucosa, as well as in small intestine and thymus.

It is found in the cytoplasm. The protein localises to the cytosol. It localises to the nucleus. Its function is as follows. Transcriptional coactivator of POU2F3. This complex drives the development of tuft cells, a rare chemosensory cells that coordinate immune and neural functions within mucosal epithelial tissues. In Homo sapiens (Human), this protein is POU domain class 2-associating factor 2.